The sequence spans 449 residues: MIRFRRRTCITLSIFIFLVCLIMAGLKHLRPENAAFGSPFGLGLFPGFHRASVLEKIPDSENHLKGNTVTETNTLPAPKDKVYQLDMEEFPPPNYDLHIFYYTWYGNPQFDGKYIHWNHPLLKHWDAKIANSFPLGKHNPPDDVGANFYPELGPYSSRDPSVIDAHMKQIRSSSVGVISVSWYPPGISDDNGEPTDDFIPSILDKAHSYGLKVNFHIEPYRNRDDYSLRNNVVYIIDKYGSHPAFYKYKTDNGRTLPMFYIYDSYITTPGTWANLLTSSGSQSIRNTPYDGIFMALLVEEKHKHDILRGGFDGFYTYFATNGFSYGSSHQHWSSLKEFCNTNNLLFIPSVGPGYIDTSIRPWNFQNTRNRINGKYYETAINAALLVRPKIISITSFNEWHEGTQIEAAIPKKTAQMKYEDYLPHKPNIYLELTRKWSEKYMKEKEHWLV.

The Cytoplasmic segment spans residues 1 to 8; that stretch reads MIRFRRRT. Residues 9-29 form a helical; Signal-anchor for type II membrane protein membrane-spanning segment; that stretch reads CITLSIFIFLVCLIMAGLKHL. Over 30-449 the chain is Lumenal; that stretch reads RPENAAFGSP…YMKEKEHWLV (420 aa). The interval 59-449 is catalytic; that stretch reads DSENHLKGNT…YMKEKEHWLV (391 aa).

This sequence belongs to the glycosyl hydrolase 99 family.

It is found in the golgi apparatus membrane. It carries out the reaction N-{alpha-Glc-(1-&gt;3)-alpha-Man-(1-&gt;2)-alpha-Man-(1-&gt;2)-alpha-Man-(1-&gt;3)-[alpha-Man-(1-&gt;2)-alpha-Man-(1-&gt;3)-[alpha-Man-(1-&gt;2)-alpha-Man-(1-&gt;6)]-alpha-Man-(1-&gt;6)]-beta-Man-(1-&gt;4)-beta-GlcNAc-(1-&gt;4)-beta-GlcNAc}-L-asparaginyl-[protein] + H2O = alpha-D-glucosyl-(1-&gt;3)-D-mannopyranose + N(4)-{alpha-D-Man-(1-&gt;2)-alpha-D-Man-(1-&gt;3)-[alpha-D-Man-(1-&gt;2)-alpha-D-Man-(1-&gt;3)-[alpha-D-Man-(1-&gt;2)-alpha-D-Man-(1-&gt;6)]-alpha-D-Man-(1-&gt;6)]-beta-D-Man-(1-&gt;4)-beta-D-GlaNAc-(1-&gt;4)-beta-D-GlcNAc}-L-asparaginyl-[protein] (N-glucan mannose isomer 8A1,2,3B1,2). This is Glycoprotein endo-alpha-1,2-mannosidase (manea) from Xenopus laevis (African clawed frog).